The chain runs to 306 residues: Ornithine carbamoyltransferase, anabolic (306 aa).

Residues S46–T49, Q73, R97, and H124–Q127 each bind carbamoyl phosphate. Residues N156, D220, and S224–M225 contribute to the L-ornithine site. Residues C260 to L261 and R288 contribute to the carbamoyl phosphate site.

It belongs to the aspartate/ornithine carbamoyltransferase superfamily. OTCase family. In terms of assembly, homohexamer; dimer of trimers.

Its subcellular location is the cytoplasm. The enzyme catalyses carbamoyl phosphate + L-ornithine = L-citrulline + phosphate + H(+). It functions in the pathway amino-acid biosynthesis; L-arginine biosynthesis; L-arginine from L-ornithine and carbamoyl phosphate: step 1/3. In terms of biological role, reversibly catalyzes the transfer of the carbamoyl group from carbamoyl phosphate (CP) to the N(epsilon) atom of ornithine (ORN) to produce L-citrulline, which is a substrate for argininosuccinate synthetase (ArgG) involved in the final step in arginine biosynthesis. In Campylobacter jejuni subsp. jejuni serotype O:2 (strain ATCC 700819 / NCTC 11168), this protein is Ornithine carbamoyltransferase, anabolic.